The following is a 394-amino-acid chain: Monoterpene synthase FDS-5, chloroplastic (394 aa).

The N-terminal 65 residues, 1-65, are a transit peptide targeting the chloroplast; that stretch reads MASFISLSSK…NLNSQFMQVY (65 aa). Isopentenyl diphosphate-binding residues include Lys100, Arg103, and Gln138. 2 residues coordinate Mg(2+): Asp145 and Asp149. A DDXXD motif motif is present at residues 145–149; that stretch reads DDMMD. Arg154 contributes to the dimethylallyl diphosphate binding site. An isopentenyl diphosphate-binding site is contributed by Arg155. Residues Lys242, Gln281, Lys298, and Lys307 each coordinate dimethylallyl diphosphate.

The protein belongs to the FPP/GGPP synthase family. Mg(2+) is required as a cofactor. The cofactor is Mn(2+).

The protein localises to the plastid. It is found in the chloroplast. It catalyses the reaction isopentenyl diphosphate + dimethylallyl diphosphate = (2E)-geranyl diphosphate + diphosphate. The enzyme catalyses 2 dimethylallyl diphosphate = (R,R)-chrysanthemyl diphosphate + diphosphate. The catalysed reaction is 2 dimethylallyl diphosphate = (R)-lavandulyl diphosphate + diphosphate. Functionally, condenses two molecules of dimethylallyl diphosphate (DMAPP) to produce mainly an irregular monoterpene, chrysanthemyl diphosphate (CPP) and lower amounts of a branched monoterpene, lavandulyl diphosphate (LPP). CPP is a precursor of the pyrethrin insecticides. When incubated with isopentenyl diphosphate (IPP) and DMAPP, catalyzes three competing isoprenoid condensation reactions, a chain elongation to give geranyl diphosphate (GPP), a cyclopropanation to give CPP and a branching to give LPP. This chain is Monoterpene synthase FDS-5, chloroplastic (FDS-5), found in Artemisia spiciformis (Spiked big sagebrush).